A 200-amino-acid polypeptide reads, in one-letter code: MFGAICAGRLVQTNLQQVADNQFVFQLDSAESLNHIVVFLLPNSPFPVGMGAKVYFQWPGKPFQFLGYLTNEKPSAIFRLKNTIQTLSENENCVGITAMLGISVEPLTNFTETPAVSTSASNVIAKPLPPVTSVAQKILTNLYNFLASFATSQLPPNSIGLGDLRPNDTFIPLRVFQDWHAKFLNKLSNNPNFLDSEDQI.

Belongs to the OPI10 family.

Its subcellular location is the cytoplasm. The protein localises to the nucleus envelope. This chain is Protein OPI10 homolog, found in Schizosaccharomyces pombe (strain 972 / ATCC 24843) (Fission yeast).